The chain runs to 190 residues: Probable E3 ubiquitin-protein ligase RHB1A (190 aa).

The RING-type; atypical zinc finger occupies 139 to 180 (CPICFEDYDVENPRLTTKCEHEFHLSCLLEWIERSDRCPICD).

It carries out the reaction S-ubiquitinyl-[E2 ubiquitin-conjugating enzyme]-L-cysteine + [acceptor protein]-L-lysine = [E2 ubiquitin-conjugating enzyme]-L-cysteine + N(6)-ubiquitinyl-[acceptor protein]-L-lysine.. The protein operates within protein modification; protein ubiquitination. Functionally, probable E3 ubiquitin-protein ligase that may possess E3 ubiquitin ligase activity in vitro. The polypeptide is Probable E3 ubiquitin-protein ligase RHB1A (Arabidopsis thaliana (Mouse-ear cress)).